The chain runs to 354 residues: Protein-arginine kinase (354 aa).

In terms of domain architecture, Phosphagen kinase C-terminal spans 24–254 (IVLSSRIRLA…QQIIQQEKMA (231 aa)). Residues 27–31 (SSRIR), histidine 92, arginine 125, 176–180 (RASVM), and 207–212 (RGIYGE) contribute to the ATP site. The RDXXRA motif of the pArg binding pocket involved in allosteric regulation motif lies at 337–342 (RDYRRA).

The protein belongs to the ATP:guanido phosphotransferase family.

It catalyses the reaction L-arginyl-[protein] + ATP = N(omega)-phospho-L-arginyl-[protein] + ADP + H(+). With respect to regulation, appears to be allosterically activated by the binding of pArg-containing polypeptides to the pArg-binding pocket localized in the C-terminal domain of McsB. Functionally, catalyzes the specific phosphorylation of arginine residues in a large number of proteins. Is part of the bacterial stress response system. Protein arginine phosphorylation has a physiologically important role and is involved in the regulation of many critical cellular processes, such as protein homeostasis, motility, competence, and stringent and stress responses, by regulating gene expression and protein activity. In Bacillus anthracis (strain A0248), this protein is Protein-arginine kinase.